The sequence spans 261 residues: MAALWLLLLVLSLHCMGAGGFVAHVESTCVLDDAGTPQDFTYCVSFNKDLLACWDPIVGKIVPCEFGVLYPLAENFSRILNKEESLLQRLQNGLPDCASHTQPFWNALTHRTRPPSVRVAQTTPFNTREPVMLACYVWGFYPADVTITWMKNGQLVPSHSNKEKTAQPNGDWTYQTVSYLALTPSYGDVYTCVVQHSGTSEPIRGDWTPGLSPIQTVKVSVSAATLGLGFIIFCVGFFRWRKSHSSSYTPLSGSTYPEGRH.

A signal peptide spans 1 to 18 (MAALWLLLLVLSLHCMGA). Positions 19 to 112 (GGFVAHVEST…PFWNALTHRT (94 aa)) are beta-1. Over 19-218 (GGFVAHVEST…PGLSPIQTVK (200 aa)) the chain is Lumenal. Intrachain disulfides connect Cys29/Cys97, Cys43/Cys53, and Cys135/Cys192. Asn75 carries an N-linked (GlcNAc...) asparagine glycan. The tract at residues 113–207 (RPPSVRVAQT…GTSEPIRGDW (95 aa)) is beta-2. The 91-residue stretch at 114–204 (PPSVRVAQTT…QHSGTSEPIR (91 aa)) folds into the Ig-like C1-type domain. Residues 208–218 (TPGLSPIQTVK) form a connecting peptide region. Residues 219-239 (VSVSAATLGLGFIIFCVGFFR) form a helical membrane-spanning segment. Residues 240-261 (WRKSHSSSYTPLSGSTYPEGRH) lie on the Cytoplasmic side of the membrane. The short motif at 248 to 251 (YTPL) is the YXXZ motif element.

This sequence belongs to the MHC class II family. Heterodimer of an alpha chain (DMA) and a beta chain (DMB). Interacts with MHCII; this interaction mediates rapid selection of high-affinity peptides.

It localises to the late endosome membrane. The protein resides in the lysosome membrane. In terms of biological role, plays a critical role in catalyzing the release of class II-associated invariant chain peptide (CLIP) from newly synthesized MHC class II molecules and freeing the peptide binding site for acquisition of antigenic peptides. This Mus musculus (Mouse) protein is Class II histocompatibility antigen, M beta 1 chain (H2-DMb1).